The primary structure comprises 97 residues: Plastocyanin (97 aa).

The 97-residue stretch at 1–97 (AEVKLGADDG…AGMKGEVTVT (97 aa)) folds into the Plastocyanin-like domain. Cu cation-binding residues include His37, Cys82, His85, and Met90.

This sequence belongs to the plastocyanin family. Requires Cu(2+) as cofactor.

The protein resides in the plastid. Its subcellular location is the chloroplast thylakoid membrane. Its function is as follows. Participates in electron transfer between P700 and the cytochrome b6-f complex in photosystem I. This Daucus carota (Wild carrot) protein is Plastocyanin (PETE).